We begin with the raw amino-acid sequence, 244 residues long: 1-(5-phosphoribosyl)-5-[(5-phosphoribosylamino)methylideneamino] imidazole-4-carboxamide isomerase (244 aa).

The active-site Proton acceptor is the Asp10. The active-site Proton donor is Asp129.

Belongs to the HisA/HisF family.

Its subcellular location is the cytoplasm. It catalyses the reaction 1-(5-phospho-beta-D-ribosyl)-5-[(5-phospho-beta-D-ribosylamino)methylideneamino]imidazole-4-carboxamide = 5-[(5-phospho-1-deoxy-D-ribulos-1-ylimino)methylamino]-1-(5-phospho-beta-D-ribosyl)imidazole-4-carboxamide. It participates in amino-acid biosynthesis; L-histidine biosynthesis; L-histidine from 5-phospho-alpha-D-ribose 1-diphosphate: step 4/9. This is 1-(5-phosphoribosyl)-5-[(5-phosphoribosylamino)methylideneamino] imidazole-4-carboxamide isomerase from Rhodococcus opacus (strain B4).